The sequence spans 134 residues: MNKSFEIGTLLLRVITGIIFFVHGLSKFQGMEGTIQFFGSIGLPSFMAYVIAAIELIGGVLVFFGLATRIVGVLFALTLIGAIITVKLKAPFMGNAEFDYLLLLTSIHLALTGSRFLALDPFVFKGKKNGNVSA.

Transmembrane regions (helical) follow at residues 5–25, 46–66, 70–90, and 91–111; these read FEIG…VHGL, FMAY…FFGL, IVGV…KLKA, and PFMG…HLAL.

It belongs to the DoxX family.

The protein localises to the cell membrane. Functionally, essential for growth and viability in the presence of catechol and probably involved in the detoxification of catechol. This chain is Putative oxidoreductase CatD (catD), found in Bacillus subtilis (strain 168).